The sequence spans 70 residues: Large ribosomal subunit protein uL29 (70 aa).

It belongs to the universal ribosomal protein uL29 family.

This is Large ribosomal subunit protein uL29 from Clostridium novyi (strain NT).